The following is a 526-amino-acid chain: Acetyl-CoA hydrolase (526 aa).

277–281 (GIGNI) contacts CoA. The active-site 5-glutamyl coenzyme A thioester intermediate is E302. 2 residues coordinate CoA: N392 and G396.

The protein belongs to the acetyl-CoA hydrolase/transferase family.

The protein resides in the cytoplasm. The catalysed reaction is acetyl-CoA + H2O = acetate + CoA + H(+). Functionally, presumably involved in regulating the intracellular acetyl-CoA pool for fatty acid and cholesterol synthesis and fatty acid oxidation. The polypeptide is Acetyl-CoA hydrolase (ACH1) (Candida glabrata (strain ATCC 2001 / BCRC 20586 / JCM 3761 / NBRC 0622 / NRRL Y-65 / CBS 138) (Yeast)).